A 120-amino-acid polypeptide reads, in one-letter code: Cytochrome b5 (120 aa).

The 77-residue stretch at 2 to 78 (PKVYSYQEVA…LKGLYIGDVD (77 aa)) folds into the Cytochrome b5 heme-binding domain. Residues His-37 and His-61 each contribute to the heme site. A helical membrane pass occupies residues 98-118 (GSGTLVVILAILMLGVAYYLL).

The protein belongs to the cytochrome b5 family.

Its subcellular location is the endoplasmic reticulum membrane. It localises to the microsome membrane. Functionally, membrane bound hemoprotein which function as an electron carrier for several membrane bound oxygenases. It plays a role in fatty-acid desaturation and is also involved in several steps of the sterol biosynthesis pathway, particularly in the 4-demethylation of the 4,4'-dimethyl zymosterol. The chain is Cytochrome b5 (CYB5) from Saccharomyces cerevisiae (strain ATCC 204508 / S288c) (Baker's yeast).